Here is a 371-residue protein sequence, read N- to C-terminus: Probable alcohol acetyltransferase (371 aa).

Catalysis depends on charge relay system residues serine 124 and histidine 295. A disordered region spans residues 325-352 (AKALEESPKESYSRPPAHQQPLHKNDFT). A compositionally biased stretch (basic and acidic residues) spans 327-336 (ALEESPKESY).

The protein belongs to the AB hydrolase superfamily.

In terms of biological role, probable alcohol acetyltransferase that uses acetyl-CoA to synthesize acetate esters from various alcohols. Not involved in the synthesis of ethyl acetate. The sequence is that of Probable alcohol acetyltransferase (EAT2) from Cyberlindnera fabianii (Yeast).